Consider the following 172-residue polypeptide: Phosphopantetheine adenylyltransferase (172 aa).

Residue Thr-14 coordinates substrate. Residues 14–15 (TF) and His-22 each bind ATP. Lys-46, Leu-78, and Arg-92 together coordinate substrate. Residues 93–95 (GMR), Glu-103, and 128–134 (WLYISST) contribute to the ATP site.

This sequence belongs to the bacterial CoaD family. Homohexamer. The cofactor is Mg(2+).

The protein localises to the cytoplasm. It carries out the reaction (R)-4'-phosphopantetheine + ATP + H(+) = 3'-dephospho-CoA + diphosphate. The protein operates within cofactor biosynthesis; coenzyme A biosynthesis; CoA from (R)-pantothenate: step 4/5. In terms of biological role, reversibly transfers an adenylyl group from ATP to 4'-phosphopantetheine, yielding dephospho-CoA (dPCoA) and pyrophosphate. This is Phosphopantetheine adenylyltransferase from Solidesulfovibrio magneticus (strain ATCC 700980 / DSM 13731 / RS-1) (Desulfovibrio magneticus).